The primary structure comprises 647 residues: 1-deoxy-D-xylulose-5-phosphate synthase (647 aa).

Thiamine diphosphate-binding positions include H79 and 120–122 (GHA). D152 lines the Mg(2+) pocket. Residues 153–154 (GS), N181, F293, and E377 each bind thiamine diphosphate. Position 181 (N181) interacts with Mg(2+).

It belongs to the transketolase family. DXPS subfamily. Homodimer. It depends on Mg(2+) as a cofactor. Thiamine diphosphate is required as a cofactor.

It carries out the reaction D-glyceraldehyde 3-phosphate + pyruvate + H(+) = 1-deoxy-D-xylulose 5-phosphate + CO2. The protein operates within metabolic intermediate biosynthesis; 1-deoxy-D-xylulose 5-phosphate biosynthesis; 1-deoxy-D-xylulose 5-phosphate from D-glyceraldehyde 3-phosphate and pyruvate: step 1/1. Functionally, catalyzes the acyloin condensation reaction between C atoms 2 and 3 of pyruvate and glyceraldehyde 3-phosphate to yield 1-deoxy-D-xylulose-5-phosphate (DXP). In Bacteroides thetaiotaomicron (strain ATCC 29148 / DSM 2079 / JCM 5827 / CCUG 10774 / NCTC 10582 / VPI-5482 / E50), this protein is 1-deoxy-D-xylulose-5-phosphate synthase.